The chain runs to 229 residues: Probable calcium-binding protein CML22 (229 aa).

4 EF-hand domains span residues glutamate 53–serine 88, leucine 89–leucine 124, serine 145–proline 180, and serine 184–leucine 219. Positions 66, 68, 70, 72, and 77 each coordinate Ca(2+).

Potential calcium sensor. In Arabidopsis thaliana (Mouse-ear cress), this protein is Probable calcium-binding protein CML22 (CML22).